Reading from the N-terminus, the 208-residue chain is Casparian strip membrane protein 2 (208 aa).

Positions 1-23 are disordered; the sequence is MDSKSGRSESAINIPESNSTKHK. Residues 1–46 lie on the Cytoplasmic side of the membrane; the sequence is MDSKSGRSESAINIPESNSTKHKSTVVHTATKVAAVAPRGGGWRRG. Residues 8–18 show a composition bias toward polar residues; the sequence is SESAINIPESN. The chain crosses the membrane as a helical span at residues 47-67; that stretch reads VSIFDFILRICALAAALAATA. Residues 68–96 lie on the Extracellular side of the membrane; the sequence is TMGTTDQTLPFFTQFFQFQASYDDLPAFT. Residues 97-117 form a helical membrane-spanning segment; sequence FFVVANGIASGYLVLSLPFSI. Over 118–129 the chain is Cytoplasmic; the sequence is ATIVRPHAAAIK. Residues 130–150 traverse the membrane as a helical segment; that stretch reads LLLIIFDTVMVAFTAAAAAAA. At 151–184 the chain is on the extracellular side; that stretch reads AAIVYLAHNGNSKTNWFAICQQFNDFCQRVSGAV. A helical membrane pass occupies residues 185–205; sequence VASFVAAVILIFLVVLSAVAI. At 206-208 the chain is on the cytoplasmic side; that stretch reads RKH.

This sequence belongs to the Casparian strip membrane proteins (CASP) family. Homodimer and heterodimers.

It localises to the cell membrane. In terms of biological role, regulates membrane-cell wall junctions and localized cell wall deposition. Required for establishment of the Casparian strip membrane domain (CSD) and the subsequent formation of Casparian strips, a cell wall modification of the root endodermis that determines an apoplastic barrier between the intraorganismal apoplasm and the extraorganismal apoplasm and prevents lateral diffusion. In Triphysaria pusilla (Dwarf owl's-clover), this protein is Casparian strip membrane protein 2.